A 327-amino-acid chain; its full sequence is GMP reductase (327 aa).

Cys176 (thioimidate intermediate) is an active-site residue. 205–228 provides a ligand contact to NADP(+); that stretch reads IIADGGIRTHGDIAKSIRFGASMV.

Belongs to the IMPDH/GMPR family. GuaC type 2 subfamily.

It carries out the reaction IMP + NH4(+) + NADP(+) = GMP + NADPH + 2 H(+). In terms of biological role, catalyzes the irreversible NADPH-dependent deamination of GMP to IMP. It functions in the conversion of nucleobase, nucleoside and nucleotide derivatives of G to A nucleotides, and in maintaining the intracellular balance of A and G nucleotides. This chain is GMP reductase, found in Streptococcus suis (strain 05ZYH33).